The sequence spans 1181 residues: Pre-mRNA-processing ATP-dependent RNA helicase prp5 (1181 aa).

Disordered stretches follow at residues 1–243 and 275–423; these read MARH…YAGK and ASAT…DAKE. Over residues 8–17 the composition is skewed to polar residues; it reads RSPSPVGSTH. Basic and acidic residues-rich tracts occupy residues 24–87 and 94–155; these read RRDD…DRSR and DRGD…RETS. The segment covering 157–166 has biased composition (low complexity); that stretch reads PATPAPTAVP. The span at 168–196 shows a compositional bias: basic and acidic residues; it reads DEEKRAERLAKLEAWKQKQAAERERKQRE. Low complexity-rich tracts occupy residues 222–243 and 275–284; these read SPQSPATPSTTADATPAPYAGK and ASATSTTTKV. Residues 285–294 show a composition bias toward polar residues; sequence QANKPSTASK. A compositionally biased stretch (acidic residues) spans 359–375; that stretch reads NAEDDDDVDMHEGDTEE. A compositionally biased stretch (basic and acidic residues) spans 384–393; that stretch reads AAERREERLQ. Residues 394–406 are compositionally biased toward polar residues; the sequence is NEASKTNGDTTMN. A compositionally biased stretch (basic and acidic residues) spans 410 to 420; that stretch reads HSQEGEKMEVD. Residues 549–577 carry the Q motif motif; the sequence is QKWSQCGLGVQTLDVIDRLGYENPTSIQS. Residues 580-758 form the Helicase ATP-binding domain; sequence IPAIMSGRDV…RKTLNKPVEI (179 aa). 593-600 contributes to the ATP binding site; that stretch reads AKTGSGKT. A DEAD box motif is present at residues 706 to 709; that stretch reads DEAD. The Helicase C-terminal domain occupies 785–935; the sequence is RLLELLGNLY…KVPEPVQQMV (151 aa). A disordered region spans residues 949-998; that stretch reads ASASGFGGKGLERLDQERDAARMRERRTYKTGEEGEEEEEKEEKNEQAEE. Residues 958-981 show a composition bias toward basic and acidic residues; sequence GLERLDQERDAARMRERRTYKTGE.

Belongs to the DEAD box helicase family. DDX46/PRP5 subfamily.

It localises to the nucleus. The enzyme catalyses ATP + H2O = ADP + phosphate + H(+). ATP-dependent RNA helicase involved spliceosome assembly and in nuclear splicing. Catalyzes an ATP-dependent conformational change of U2 snRNP. Bridges U1 and U2 snRNPs and enables stable U2 snRNP association with intron RNA. In Aspergillus terreus (strain NIH 2624 / FGSC A1156), this protein is Pre-mRNA-processing ATP-dependent RNA helicase prp5 (prp5).